Consider the following 278-residue polypeptide: Elongation factor Ts 1, mitochondrial (278 aa).

The protein belongs to the EF-Ts family.

The protein localises to the mitochondrion. Functionally, associates with the EF-Tu.GDP complex and induces the exchange of GDP to GTP. It remains bound to the aminoacyl-tRNA.EF-Tu.GTP complex up to the GTP hydrolysis stage on the ribosome. This Trypanosoma cruzi (strain CL Brener) protein is Elongation factor Ts 1, mitochondrial.